The chain runs to 398 residues: Argininosuccinate lyase (398 aa).

This sequence belongs to the lyase 1 family. Argininosuccinate lyase subfamily.

Its subcellular location is the cytoplasm. The catalysed reaction is 2-(N(omega)-L-arginino)succinate = fumarate + L-arginine. It participates in amino-acid biosynthesis; L-arginine biosynthesis; L-arginine from L-ornithine and carbamoyl phosphate: step 3/3. The polypeptide is Argininosuccinate lyase (Thermotoga neapolitana (strain ATCC 49049 / DSM 4359 / NBRC 107923 / NS-E)).